We begin with the raw amino-acid sequence, 279 residues long: Acetyl-coenzyme A carboxylase carboxyl transferase subunit beta (279 aa).

Residues 23-279 (LWSKCDECGA…LIKLFKHLRG (257 aa)) enclose the CoA carboxyltransferase N-terminal domain. Zn(2+) is bound by residues Cys27, Cys30, Cys46, and Cys49. The C4-type zinc-finger motif lies at 27 to 49 (CDECGAALHKKQLEDHLYTCPEC).

The protein belongs to the AccD/PCCB family. As to quaternary structure, acetyl-CoA carboxylase is a heterohexamer composed of biotin carboxyl carrier protein (AccB), biotin carboxylase (AccC) and two subunits each of ACCase subunit alpha (AccA) and ACCase subunit beta (AccD). Zn(2+) is required as a cofactor.

It is found in the cytoplasm. It catalyses the reaction N(6)-carboxybiotinyl-L-lysyl-[protein] + acetyl-CoA = N(6)-biotinyl-L-lysyl-[protein] + malonyl-CoA. The protein operates within lipid metabolism; malonyl-CoA biosynthesis; malonyl-CoA from acetyl-CoA: step 1/1. Functionally, component of the acetyl coenzyme A carboxylase (ACC) complex. Biotin carboxylase (BC) catalyzes the carboxylation of biotin on its carrier protein (BCCP) and then the CO(2) group is transferred by the transcarboxylase to acetyl-CoA to form malonyl-CoA. In Chlorobaculum parvum (strain DSM 263 / NCIMB 8327) (Chlorobium vibrioforme subsp. thiosulfatophilum), this protein is Acetyl-coenzyme A carboxylase carboxyl transferase subunit beta.